The following is a 146-amino-acid chain: Deoxyuridine 5'-triphosphate nucleotidohydrolase (146 aa).

Residues 65-67 (RSG), asparagine 78, 82-84 (LID), and methionine 92 each bind substrate.

Belongs to the dUTPase family. It depends on Mg(2+) as a cofactor.

It carries out the reaction dUTP + H2O = dUMP + diphosphate + H(+). The protein operates within pyrimidine metabolism; dUMP biosynthesis; dUMP from dCTP (dUTP route): step 2/2. Functionally, this enzyme is involved in nucleotide metabolism: it produces dUMP, the immediate precursor of thymidine nucleotides and it decreases the intracellular concentration of dUTP so that uracil cannot be incorporated into DNA. The sequence is that of Deoxyuridine 5'-triphosphate nucleotidohydrolase from Thiobacillus denitrificans (strain ATCC 25259 / T1).